Reading from the N-terminus, the 224-residue chain is uncharacterized protein (224 aa).

One can recognise an ABC transporter domain in the interval 2–221 (IEAKNVWKIY…KLRDGEIVEI (220 aa)). 38–45 (GPSGCGKS) provides a ligand contact to ATP.

This sequence belongs to the ABC transporter superfamily.

This is an uncharacterized protein from Methanocaldococcus jannaschii (strain ATCC 43067 / DSM 2661 / JAL-1 / JCM 10045 / NBRC 100440) (Methanococcus jannaschii).